Here is a 418-residue protein sequence, read N- to C-terminus: Putative competence-damage inducible protein (418 aa).

It belongs to the CinA family.

This chain is Putative competence-damage inducible protein, found in Streptococcus pneumoniae serotype 2 (strain D39 / NCTC 7466).